We begin with the raw amino-acid sequence, 253 residues long: Prolactin-7A2 (253 aa).

An N-terminal signal peptide occupies residues 1–30 (MSFSFSQPCPSGALLLVVVSSLLLWENVAS). Asparagine 36, asparagine 103, and asparagine 135 each carry an N-linked (GlcNAc...) asparagine glycan. 2 cysteine pairs are disulfide-bonded: cysteine 101–cysteine 218 and cysteine 235–cysteine 244.

This sequence belongs to the somatotropin/prolactin family. As to expression, expression restricted to the placental tissue. Expressed only in the spongiotrophoblasts.

It is found in the secreted. The chain is Prolactin-7A2 (Prl7a2) from Mus musculus (Mouse).